The following is a 256-amino-acid chain: Thiazole synthase (256 aa).

Lys-95 (schiff-base intermediate with DXP) is an active-site residue. Residues Gly-156, 182 to 183 (AG), and 204 to 205 (NT) each bind 1-deoxy-D-xylulose 5-phosphate.

Belongs to the ThiG family. In terms of assembly, homotetramer. Forms heterodimers with either ThiH or ThiS.

The protein localises to the cytoplasm. The catalysed reaction is [ThiS sulfur-carrier protein]-C-terminal-Gly-aminoethanethioate + 2-iminoacetate + 1-deoxy-D-xylulose 5-phosphate = [ThiS sulfur-carrier protein]-C-terminal Gly-Gly + 2-[(2R,5Z)-2-carboxy-4-methylthiazol-5(2H)-ylidene]ethyl phosphate + 2 H2O + H(+). It participates in cofactor biosynthesis; thiamine diphosphate biosynthesis. Its function is as follows. Catalyzes the rearrangement of 1-deoxy-D-xylulose 5-phosphate (DXP) to produce the thiazole phosphate moiety of thiamine. Sulfur is provided by the thiocarboxylate moiety of the carrier protein ThiS. In vitro, sulfur can be provided by H(2)S. The chain is Thiazole synthase from Shigella dysenteriae serotype 1 (strain Sd197).